Reading from the N-terminus, the 670-residue chain is Solute carrier organic anion transporter family member 1A6 (670 aa).

Residues 1–20 (MGEPGKRVGIHRVRCFAKIK) lie on the Cytoplasmic side of the membrane. The helical transmembrane segment at 21 to 40 (VFLLALIWAYISKILSGVYM) threads the bilayer. At 41–59 (STMLTQLERQFNISTSIVG) the chain is on the extracellular side. A glycan (N-linked (GlcNAc...) asparagine) is linked at Asn-52. The chain crosses the membrane as a helical span at residues 60–80 (LINGSFEMGNLLVIVFVSYFG). Over 81-86 (TKLHRP) the chain is Cytoplasmic. Residues 87-111 (IMIGVGCAVMGLGCFIISLPHFLMG) traverse the membrane as a helical segment. At 112–155 (RYEYETTISPTSNLSSNSFLCVENRSQTLKPTQDPAECVKEIKS) the chain is on the extracellular side. Residues Asn-124 and Asn-135 are each glycosylated (N-linked (GlcNAc...) asparagine). A helical transmembrane segment spans residues 156-184 (LMWIYVLVGNIIRGIGETPIMPLGISYIE). Topologically, residues 185 to 203 (DFAKSENSPLYIGILEVGK) are cytoplasmic. Residues 204 to 224 (MIGPILGYLMGPFCANIYVDT) traverse the membrane as a helical segment. At 225 to 242 (GSVNTDDLTITPTDTRWV) the chain is on the extracellular side. The chain crosses the membrane as a helical span at residues 243–267 (GAWWIGFLVCAGVNVLTSIPFFFFP). At 268–311 (KTLPKEGLQDNGDGTENAKEEKHRDKAKEENQGIIKEFFLMMKN) the chain is on the cytoplasmic side. Residues 312–333 (LFCNPIYMLCVLTSVLQVNGVA) form a helical membrane-spanning segment. Over 334-353 (NIVIYKPKYLEHHFGISTAK) the chain is Extracellular. The helical transmembrane segment at 354–377 (AVFLIGLYTTPSVSAGYLISGFIM) threads the bilayer. Over 378 to 381 (KKLK) the chain is Cytoplasmic. Residues 382–405 (ITLKKAAIIALCLFMSECLLSLCN) traverse the membrane as a helical segment. The Extracellular portion of the chain corresponds to 406-513 (FMLTCDTTPI…PDCANKLQYF (108 aa)). One can recognise a Kazal-like domain in the interval 433-488 (NKFLSDCNTRCNCLTKTWDPVCGNNGLAYMSPCLAGCEKSVGTGANMVFQNCSCIR). 3 disulfide bridges follow: Cys-439–Cys-469, Cys-445–Cys-465, and Cys-454–Cys-486. Asn-483 and Asn-492 each carry an N-linked (GlcNAc...) asparagine glycan. A helical transmembrane segment spans residues 514-536 (LIITVFCCFFYSLATIPGYMVFL). At 537 to 545 (RCMKSEEKS) the chain is on the cytoplasmic side. A helical transmembrane segment spans residues 546–571 (LGIGLQAFFMRLFAGIPAPIYFGALI). The Extracellular portion of the chain corresponds to 572-605 (DRTCLHWGTLKCGEPGACRTYEVSSFRRLYLGLP). A helical membrane pass occupies residues 606–623 (AALRGSIILPSFFILRLI). Topologically, residues 624 to 670 (RKLQIPGDTDSSEIELAETKPTEKESECTDMHKSSKVENDGELKTKL) are cytoplasmic. Thr-632 is subject to Phosphothreonine. A disordered region spans residues 633-670 (DSSEIELAETKPTEKESECTDMHKSSKVENDGELKTKL). Residues Ser-634 and Ser-635 each carry the phosphoserine modification. A compositionally biased stretch (basic and acidic residues) spans 640 to 670 (AETKPTEKESECTDMHKSSKVENDGELKTKL).

The protein belongs to the organo anion transporter (TC 2.A.60) family. Kidney specific.

It is found in the cell membrane. May mediate the Na(+)-independent transport of organic anions. The polypeptide is Solute carrier organic anion transporter family member 1A6 (Slco1a6) (Mus musculus (Mouse)).